The following is an 855-amino-acid chain: DNA mismatch repair protein MutS (855 aa).

Residue 616–623 coordinates ATP; sequence GPNMGGKS.

This sequence belongs to the DNA mismatch repair MutS family.

This protein is involved in the repair of mismatches in DNA. It is possible that it carries out the mismatch recognition step. This protein has a weak ATPase activity. The protein is DNA mismatch repair protein MutS of Salmonella dublin (strain CT_02021853).